Here is a 522-residue protein sequence, read N- to C-terminus: Putative malate dehydrogenase 1B (522 aa).

A disordered region spans residues 495 to 522; the sequence is EETEKSSSEDTPEAAAAAVSTGDETVPS.

The protein belongs to the LDH/MDH superfamily. MDH type 2 family.

This Branchiostoma floridae (Florida lancelet) protein is Putative malate dehydrogenase 1B (MDH1B).